Reading from the N-terminus, the 200-residue chain is uncharacterized protein (200 aa).

This is an uncharacterized protein from Commelina yellow mottle virus (CoYMV).